The chain runs to 250 residues: tRNA (guanine-N(7)-)-methyltransferase (250 aa).

Positions 79, 104, 131, and 154 each coordinate S-adenosyl-L-methionine. Asp-154 is an active-site residue. Substrate is bound by residues Lys-158, Asp-190, and 228-231 (TKFE).

This sequence belongs to the class I-like SAM-binding methyltransferase superfamily. TrmB family.

The catalysed reaction is guanosine(46) in tRNA + S-adenosyl-L-methionine = N(7)-methylguanosine(46) in tRNA + S-adenosyl-L-homocysteine. It functions in the pathway tRNA modification; N(7)-methylguanine-tRNA biosynthesis. Catalyzes the formation of N(7)-methylguanine at position 46 (m7G46) in tRNA. This Actinobacillus pleuropneumoniae serotype 5b (strain L20) protein is tRNA (guanine-N(7)-)-methyltransferase.